Reading from the N-terminus, the 239-residue chain is Ribosomal RNA small subunit methyltransferase G (239 aa).

S-adenosyl-L-methionine-binding positions include Gly77, Phe82, Ala128–Glu129, and Arg147.

Belongs to the methyltransferase superfamily. RNA methyltransferase RsmG family.

Its subcellular location is the cytoplasm. In terms of biological role, specifically methylates the N7 position of guanine in position 535 of 16S rRNA. The chain is Ribosomal RNA small subunit methyltransferase G from Bacillus cereus (strain ZK / E33L).